Reading from the N-terminus, the 510-residue chain is ATP synthase subunit alpha (510 aa).

169–176 provides a ligand contact to ATP; that stretch reads GDRQTGKT.

This sequence belongs to the ATPase alpha/beta chains family. F-type ATPases have 2 components, CF(1) - the catalytic core - and CF(0) - the membrane proton channel. CF(1) has five subunits: alpha(3), beta(3), gamma(1), delta(1), epsilon(1). CF(0) has three main subunits: a(1), b(2) and c(9-12). The alpha and beta chains form an alternating ring which encloses part of the gamma chain. CF(1) is attached to CF(0) by a central stalk formed by the gamma and epsilon chains, while a peripheral stalk is formed by the delta and b chains.

The protein resides in the cell inner membrane. It carries out the reaction ATP + H2O + 4 H(+)(in) = ADP + phosphate + 5 H(+)(out). Functionally, produces ATP from ADP in the presence of a proton gradient across the membrane. The alpha chain is a regulatory subunit. The sequence is that of ATP synthase subunit alpha from Rickettsia peacockii (strain Rustic).